A 237-amino-acid polypeptide reads, in one-letter code: tRNA (guanine-N(7)-)-methyltransferase (237 aa).

The S-adenosyl-L-methionine site is built by Glu-56, Glu-81, Asp-108, and Asp-131. The active site involves Asp-131. Residues Lys-135, Asp-167, and 204 to 207 (TKFE) contribute to the substrate site.

The protein belongs to the class I-like SAM-binding methyltransferase superfamily. TrmB family.

The enzyme catalyses guanosine(46) in tRNA + S-adenosyl-L-methionine = N(7)-methylguanosine(46) in tRNA + S-adenosyl-L-homocysteine. Its pathway is tRNA modification; N(7)-methylguanine-tRNA biosynthesis. Catalyzes the formation of N(7)-methylguanine at position 46 (m7G46) in tRNA. The chain is tRNA (guanine-N(7)-)-methyltransferase from Legionella pneumophila (strain Paris).